We begin with the raw amino-acid sequence, 396 residues long: Cathepsin E (396 aa).

Residues Met-1–Gly-19 form the signal peptide. Residues Thr-20–Met-53 constitute a propeptide, activation peptide. Residues Tyr-78–Ala-392 enclose the Peptidase A1 domain. An N-linked (GlcNAc...) asparagine glycan is attached at Asn-90. The active site involves Asp-96. 2 disulfides stabilise this stretch: Cys-109–Cys-114 and Cys-272–Cys-276. Residue Asp-281 is part of the active site. An intrachain disulfide couples Cys-314 to Cys-351.

It belongs to the peptidase A1 family. As to quaternary structure, homodimer; disulfide-linked. Glycosylated. The nature of the carbohydrate chain varies between cell types.

It localises to the endosome. The enzyme catalyses Similar to cathepsin D, but slightly broader specificity.. Functionally, may have a role in immune function. Probably involved in the processing of antigenic peptides during MHC class II-mediated antigen presentation. May play a role in activation-induced lymphocyte depletion in the thymus, and in neuronal degeneration and glial cell activation in the brain. The chain is Cathepsin E (CTSE) from Oryctolagus cuniculus (Rabbit).